A 322-amino-acid chain; its full sequence is Aldo-keto reductase family 1 member C23 (322 aa).

NADP(+) is bound at residue 20–24 (GFGTY). A substrate-binding site is contributed by lysine 31. Aspartate 50 lines the NADP(+) pocket. Tyrosine 55 acts as the Proton donor in catalysis. Histidine 117 is a binding site for substrate. NADP(+) contacts are provided by residues 166–167 (SN), glutamine 190, 216–221 (YSALGS), and 269–279 (KSYNEKRIKEN).

The protein belongs to the aldo/keto reductase family. In terms of assembly, monomer. Detected in follicle granulosa cells (at protein level). Detected in heart, lung, liver, kidney, stomach, uterus, testis, skeletal muscle and granulosa cells of the follicle wall.

It is found in the cytoplasm. In terms of biological role, NADP-dependent oxidoreductase that has 20-alpha-hydroxysteroid dehydrogenase activity. The polypeptide is Aldo-keto reductase family 1 member C23 (AKR1C23) (Equus caballus (Horse)).